Reading from the N-terminus, the 386-residue chain is Interleukin-13 receptor subunit alpha-2 (386 aa).

The N-terminal stretch at 1-21 is a signal peptide; it reads MAFIHLDVGFLYTLLVCTAFG. Residues 22-338 are Extracellular-facing; sequence SMLSNAEIKV…CWKGDIWKET (317 aa). Fibronectin type-III domains lie at 33–133, 138–234, and 239–338; these read PPQD…SPQG, KIQD…LQNI, and PPDY…WKET. C64 and C112 form a disulfide bridge. An N-linked (GlcNAc...) asparagine glycan is attached at N114. 2 disulfides stabilise this stretch: C144-C154 and C183-C196. N214 and N298 each carry an N-linked (GlcNAc...) asparagine glycan. A disulfide bridge connects residues C268 and C315. Residues 321–325 carry the WSXWS motif motif; sequence WSEWS. A helical membrane pass occupies residues 339-359; sequence LVFFLIPFAFVSIFVLVITCL. Topologically, residues 360–386 are cytoplasmic; the sequence is LLYKQRALLKTIFHTKKEVFSHQDTFC.

Belongs to the type I cytokine receptor family. Type 5 subfamily. Interacts with IL4RA. Interacts with high affinity to interleukin-13 (IL13), but not to interleukin-4 (IL4). Cleaved by MMP8 leading to a soluble form that is also able to interact with IL13. As to expression, expressed in kidney, placenta, liver, skeletal muscle and thymus. Expression was not seen in whole blood and heart.

It localises to the cell membrane. Its function is as follows. Cell surface receptor that plays a role in the regulation of IL-13-mediated responses. Functions as a decoy receptor that inhibits IL-13- and IL-4-mediated signal transduction via the JAK-STAT pathway and thereby modulates immune responses and inflammation. Serves as a functional signaling receptor for IL-13 in an alternative pathway involving AP-1 ultimately leading to the production of TGFB1. The sequence is that of Interleukin-13 receptor subunit alpha-2 (IL13RA2) from Canis lupus familiaris (Dog).